The sequence spans 470 residues: Uronate isomerase (470 aa).

This sequence belongs to the metallo-dependent hydrolases superfamily. Uronate isomerase family.

It catalyses the reaction D-glucuronate = D-fructuronate. It carries out the reaction aldehydo-D-galacturonate = keto-D-tagaturonate. Its pathway is carbohydrate metabolism; pentose and glucuronate interconversion. The sequence is that of Uronate isomerase from Escherichia coli O157:H7 (strain EC4115 / EHEC).